Consider the following 1094-residue polypeptide: Probable arabinosyltransferase A (1094 aa).

A run of 13 helical transmembrane segments spans residues 12–34 (IARLAAVVSGIAGLLLCGIVPLL), 205–224 (AVMLLGVLAVLVAMVGLAAL), 247–269 (GFASRLADAAVIATLLLWHVIGA), 322–344 (VWMRLPATLAGIACWLIVSRFVL), 356–375 (SNRVAVFTAGAVFLSAWLPF), 408–430 (AAVAIIVATLTATLAPQGLIALA), 451–470 (GLLAPLAVLAAALSLITVVV), 519–536 (FAVLVLLFCLFGVLFVLL), 543–565 (GLASGPAWRLIGTTAVGLLLLTF), 575–597 (GAFAGLAGVLGAVTAFTFARIGL), 604–626 (TLYVTALLFVLAWATSGINGWFY), 641–663 (IASHPVTSMFLTLSILTGLLAAW), and 684–706 (ILASTPLLVVAVIMVAGEVGSMA).

The protein belongs to the emb family.

Its subcellular location is the cell membrane. Functionally, arabinosyl transferase responsible for the polymerization of arabinose into the arabinan of arabinogalactan. This Mycobacterium tuberculosis (strain CDC 1551 / Oshkosh) protein is Probable arabinosyltransferase A (embA).